The following is a 364-amino-acid chain: Aminomethyltransferase (364 aa).

It belongs to the GcvT family. As to quaternary structure, the glycine cleavage system is composed of four proteins: P, T, L and H.

It carries out the reaction N(6)-[(R)-S(8)-aminomethyldihydrolipoyl]-L-lysyl-[protein] + (6S)-5,6,7,8-tetrahydrofolate = N(6)-[(R)-dihydrolipoyl]-L-lysyl-[protein] + (6R)-5,10-methylene-5,6,7,8-tetrahydrofolate + NH4(+). Functionally, the glycine cleavage system catalyzes the degradation of glycine. The protein is Aminomethyltransferase of Shewanella sp. (strain MR-4).